We begin with the raw amino-acid sequence, 369 residues long: UDP-3-O-acylglucosamine N-acyltransferase (369 aa).

Histidine 252 functions as the Proton acceptor in the catalytic mechanism. The disordered stretch occupies residues 348 to 369; it reads ERRQRGENNAPAQNKQDEEKSS.

It belongs to the transferase hexapeptide repeat family. LpxD subfamily. Homotrimer.

It carries out the reaction a UDP-3-O-[(3R)-3-hydroxyacyl]-alpha-D-glucosamine + a (3R)-hydroxyacyl-[ACP] = a UDP-2-N,3-O-bis[(3R)-3-hydroxyacyl]-alpha-D-glucosamine + holo-[ACP] + H(+). It functions in the pathway bacterial outer membrane biogenesis; LPS lipid A biosynthesis. Functionally, catalyzes the N-acylation of UDP-3-O-acylglucosamine using 3-hydroxyacyl-ACP as the acyl donor. Is involved in the biosynthesis of lipid A, a phosphorylated glycolipid that anchors the lipopolysaccharide to the outer membrane of the cell. The sequence is that of UDP-3-O-acylglucosamine N-acyltransferase from Cupriavidus metallidurans (strain ATCC 43123 / DSM 2839 / NBRC 102507 / CH34) (Ralstonia metallidurans).